We begin with the raw amino-acid sequence, 132 residues long: Small ribosomal subunit protein uS8 (132 aa).

This sequence belongs to the universal ribosomal protein uS8 family. In terms of assembly, part of the 30S ribosomal subunit. Contacts proteins S5 and S12.

Its function is as follows. One of the primary rRNA binding proteins, it binds directly to 16S rRNA central domain where it helps coordinate assembly of the platform of the 30S subunit. This is Small ribosomal subunit protein uS8 from Mycolicibacterium gilvum (strain PYR-GCK) (Mycobacterium gilvum (strain PYR-GCK)).